A 242-amino-acid chain; its full sequence is Ribosomal RNA small subunit methyltransferase G (242 aa).

S-adenosyl-L-methionine-binding positions include Gly-78, Phe-83, 129–130 (AE), and Arg-148. The tract at residues 221–242 (TKKRYPRKAGVPEKSPIGGKHD) is disordered.

This sequence belongs to the methyltransferase superfamily. RNA methyltransferase RsmG family.

It localises to the cytoplasm. Functionally, specifically methylates the N7 position of a guanine in 16S rRNA. This Oenococcus oeni (strain ATCC BAA-331 / PSU-1) protein is Ribosomal RNA small subunit methyltransferase G.